The sequence spans 616 residues: Probable galacturonosyltransferase 4 (616 aa).

The Cytoplasmic portion of the chain corresponds to 1 to 6 (MMVKLR). A helical; Signal-anchor for type II membrane protein transmembrane segment spans residues 7 to 29 (NLVLFFMLLTVVAHILLYTDPAA). Residues 30–616 (SFKTPFSKRD…VYLRECNINP (587 aa)) are Lumenal-facing. A disordered region spans residues 132–152 (QTSEKVDEQPEPNAFGAKKDT). 5 N-linked (GlcNAc...) asparagine glycosylation sites follow: Asn291, Asn326, Asn378, Asn481, and Asn514.

Belongs to the glycosyltransferase 8 family. As to expression, expressed in roots, inflorescences, siliques, leaves and stems.

The protein localises to the golgi apparatus membrane. The protein operates within glycan metabolism; pectin biosynthesis. May be involved in pectin and/or xylans biosynthesis in cell walls. This Arabidopsis thaliana (Mouse-ear cress) protein is Probable galacturonosyltransferase 4 (GAUT4).